The primary structure comprises 1157 residues: Zinc finger protein 516 (1157 aa).

A compositionally biased stretch (basic and acidic residues) spans 1 to 13; sequence MDRSREAEMELRR. The disordered stretch occupies residues 1–26; it reads MDRSREAEMELRRGPSPPRAGRSHEV. The mediates promoter DNA-binding and activation of transcription stretch occupies residues 1-420; the sequence is MDRSREAEME…ATRGKVAEPA (420 aa). 7 C2H2-type zinc fingers span residues 34–56, 62–84, 162–185, 188–211, 236–258, 264–286, and 323–345; these read HSCCICGKSFPFQSSLSQHMRKH, YKCPYCDHRASQKGNLKIHIRSH, VPCSFCKSRFERKKDLELHVHQAH, FKCRLCSYVTLREESLLSHIERDH, FPCEVCGQAFSQTWFLKAHMKKH, HGCHICGRRFKEPWFLKNHMKAH, and EVCTKCGNLFTNLDSLNAHNAIH. Positions 449–458 are enriched in basic and acidic residues; the sequence is SQEKRKREQD. Disordered stretches follow at residues 449-503 and 523-653; these read SQEK…QGKS and SRVH…KGPE. Positions 494-503 are enriched in polar residues; it reads ASATTGQGKS. Residues 504–526 form a C2H2-type 8 zinc finger; it reads SECFECGKIFRTYHQMVLHSRVH. Over residues 531-541 the composition is skewed to basic and acidic residues; the sequence is RDRDPEGDRAA. Polar residues predominate over residues 550 to 561; the sequence is EGDSASQPSSPG. A compositionally biased stretch (acidic residues) spans 575-585; it reads EVVDDSGEEAV. Polar residues predominate over residues 601–612; sequence GEVTPTALSNGD. Lys630 is covalently cross-linked (Glycyl lysine isopeptide (Lys-Gly) (interchain with G-Cter in SUMO2)). Residues 644-653 are compositionally biased toward basic and acidic residues; the sequence is SSRETTKGPE. Residue Lys669 forms a Glycyl lysine isopeptide (Lys-Gly) (interchain with G-Cter in SUMO2) linkage. The C2H2-type 9; atypical zinc-finger motif lies at 753–776; it reads HPCPYCTHKTYYPEVLWMHKRIWH. 2 disordered regions span residues 831–996 and 1013–1040; these read TQVP…EPSV and RGEAALQAPPGAPPTLNSAKQEPAAEGQ. Residues 914–928 show a composition bias toward polar residues; it reads GSGSLSRSTTPTPSV. Residues Lys1032 and Lys1051 each participate in a glycyl lysine isopeptide (Lys-Gly) (interchain with G-Cter in SUMO2) cross-link. Residues 1092–1114 form a C2H2-type 10 zinc finger; it reads FVCVECGKSFHQPSQLRAHLRAH. A disordered region spans residues 1123 to 1157; the sequence is PRDSEVHTASTDAPKQGRDHTTPGTVPAGPLRKGI.

The protein belongs to the krueppel C2H2-type zinc-finger protein family. In terms of assembly, interacts with PRDM16; the interaction is direct and may play a role in the transcription of brown adipose tissue-specific genes. Interacts with PWWP2B. Interacts with HDAC1; this interaction is enhanced in the presence of PWWP2B. As to expression, expressed by adipocytes more specifically in brown adipose tissue compared to white adipose tissue (WAT).

The protein localises to the nucleus. Functionally, transcriptional regulator that binds to the promoter and activates the transcription of genes promoting brown adipose tissue (BAT) differentiation. Among brown adipose tissue-specific genes, binds the proximal region of the promoter of the UCP1 gene to activate its transcription and thereby regulate thermogenesis. May also play a role in the cellular response to replication stress. In Mus musculus (Mouse), this protein is Zinc finger protein 516.